We begin with the raw amino-acid sequence, 332 residues long: 2,3-diketo-L-gulonate reductase (332 aa).

Residue His44 is the Proton donor of the active site. NAD(+) contacts are provided by residues 168–174 (ITMVDMS), 224–225 (WK), and 304–306 (GHE).

This sequence belongs to the LDH2/MDH2 oxidoreductase family. DlgD subfamily. As to quaternary structure, homodimer.

It is found in the cytoplasm. The enzyme catalyses 3-dehydro-L-gulonate + NAD(+) = 2,3-dioxo-L-gulonate + NADH + H(+). It carries out the reaction 3-dehydro-L-gulonate + NADP(+) = 2,3-dioxo-L-gulonate + NADPH + H(+). Functionally, catalyzes the reduction of 2,3-diketo-L-gulonate in the presence of NADH, to form 3-keto-L-gulonate. The protein is 2,3-diketo-L-gulonate reductase of Klebsiella pneumoniae (strain 342).